An 887-amino-acid polypeptide reads, in one-letter code: ABC transporter A family member 10 (887 aa).

Transmembrane regions (helical) follow at residues 38–58, 198–218, 245–265, 277–297, 309–329, 335–355, and 376–396; these read GIQY…VITL, YLYV…LLVT, IIIV…VVLY, VMLF…GIIL, AISS…QFYL, SSWL…EFLY, and ISFL…WYIT. A compositionally biased stretch (low complexity) spans 443-469; sequence NNCNNNNTSPSSSSSSQSSPLNKPLLS. Positions 443–474 are disordered; that stretch reads NNCNNNNTSPSSSSSSQSSPLNKPLLSGDSDD. One can recognise an ABC transporter domain in the interval 481 to 728; the sequence is IRLVNLKKTY…FNLGYILTIV (248 aa). Residue 519–526 participates in ATP binding; the sequence is GQNGSGKT. The segment covering 774–797 has biased composition (low complexity); the sequence is NNNNNENNSNNSDGSSSSSDSSSS. Positions 774 to 799 are disordered; it reads NNNNNENNSNNSDGSSSSSDSSSSKD.

This sequence belongs to the ABC transporter superfamily. ABCA family.

Its subcellular location is the membrane. This Dictyostelium discoideum (Social amoeba) protein is ABC transporter A family member 10 (abcA10).